The sequence spans 137 residues: MPKYQFQVQVQVQPQYLPDQSAPDEGVYSFAYTITITNTGDVTAQLISRHWIISDANGHTEQVKGLGVVGQQPLLKPGEAFQYTSGCRLRTASGSMHGSYFCVAEDGEPFTCPIELFVLEAFSPGQPGQPMAARVLH.

Residues 2 to 126 enclose the ApaG domain; sequence PKYQFQVQVQ…FVLEAFSPGQ (125 aa).

The protein is Protein ApaG of Acidovorax sp. (strain JS42).